Reading from the N-terminus, the 256-residue chain is Probable transcriptional regulatory protein A1I_03240 (256 aa).

A disordered region spans residues 1-21 (MAGHSKFKNIQHRKGAQDKKR).

This sequence belongs to the TACO1 family.

It is found in the cytoplasm. In Rickettsia bellii (strain OSU 85-389), this protein is Probable transcriptional regulatory protein A1I_03240.